We begin with the raw amino-acid sequence, 356 residues long: Glutamine synthetase cytosolic isozyme 1-1 (356 aa).

N-acetylserine is present on S2. A phosphoserine mark is found at S2 and S48. A GS beta-grasp domain is found at 19–99 (IIAEYIWVGG…VMCDAYTPAG (81 aa)). The tract at residues 36–62 (KARTLPGPVTDPSQLPKWNYDGSSTGQ) is disordered. The GS catalytic domain maps to 106-356 (KRHAAAKVFS…IAETTILWNP (251 aa)).

The protein belongs to the glutamine synthetase family. In terms of assembly, homooctamer. Interacts with CRK3 and GRF3. Post-translationally, phosphorylated by CRK3. Expressed in root tips, root hairs and epidermis. Ubiquitously expressed with higher levels in siliques and roots.

The protein resides in the cytoplasm. It carries out the reaction L-glutamate + NH4(+) + ATP = L-glutamine + ADP + phosphate + H(+). In terms of biological role, high-affinity glutamine synthetase which catalyzes the synthesis of glutamine from ammonium and glutamate. May contribute to the homeostatic control of glutamine synthesis in roots. The polypeptide is Glutamine synthetase cytosolic isozyme 1-1 (GLN1-1) (Arabidopsis thaliana (Mouse-ear cress)).